We begin with the raw amino-acid sequence, 545 residues long: Glucans biosynthesis protein G (545 aa).

The signal sequence occupies residues 1-34 (MVSLLRCQSFKPSSSLICSLALSAAFALSSSAFA). Residues 38–60 (KPAENKPATPVVSPPKATAQPAN) form a disordered region.

The protein belongs to the OpgD/OpgG family.

The protein localises to the periplasm. It participates in glycan metabolism; osmoregulated periplasmic glucan (OPG) biosynthesis. Functionally, involved in the biosynthesis of osmoregulated periplasmic glucans (OPGs). The polypeptide is Glucans biosynthesis protein G (Shewanella sp. (strain ANA-3)).